Reading from the N-terminus, the 248-residue chain is DNA polymerase sliding clamp 2 (248 aa).

It belongs to the PCNA family. Homotrimer. The subunits circularize to form a toroid; DNA passes through its center. Replication factor C (RFC) is required to load the toroid on the DNA.

Sliding clamp subunit that acts as a moving platform for DNA processing. Responsible for tethering the catalytic subunit of DNA polymerase and other proteins to DNA during high-speed replication. This Sulfurisphaera ohwakuensis protein is DNA polymerase sliding clamp 2.